The sequence spans 331 residues: Ribonuclease Z (331 aa).

Residues histidine 56, histidine 58, aspartate 60, histidine 61, histidine 162, aspartate 235, and histidine 297 each coordinate Zn(2+). Aspartate 60 (proton acceptor) is an active-site residue.

It belongs to the RNase Z family. Homodimer. Zn(2+) serves as cofactor.

The catalysed reaction is Endonucleolytic cleavage of RNA, removing extra 3' nucleotides from tRNA precursor, generating 3' termini of tRNAs. A 3'-hydroxy group is left at the tRNA terminus and a 5'-phosphoryl group is left at the trailer molecule.. Zinc phosphodiesterase, which displays some tRNA 3'-processing endonuclease activity. Probably involved in tRNA maturation, by removing a 3'-trailer from precursor tRNA. In Deinococcus radiodurans (strain ATCC 13939 / DSM 20539 / JCM 16871 / CCUG 27074 / LMG 4051 / NBRC 15346 / NCIMB 9279 / VKM B-1422 / R1), this protein is Ribonuclease Z (rnz).